The primary structure comprises 215 residues: Probable phosphoglycerate mutase GpmB (215 aa).

Residues 8-15 (RHGETQWN), 21-22 (QG), Arg58, Lys60, 82-85 (ELDM), 104-105 (RR), and 151-152 (GI) contribute to the substrate site. His9 functions as the Tele-phosphohistidine intermediate in the catalytic mechanism. Glu82 serves as the catalytic Proton donor/acceptor.

This sequence belongs to the phosphoglycerate mutase family. GpmB subfamily.

It carries out the reaction (2R)-2-phosphoglycerate = (2R)-3-phosphoglycerate. Its pathway is carbohydrate degradation; glycolysis; pyruvate from D-glyceraldehyde 3-phosphate: step 3/5. The protein is Probable phosphoglycerate mutase GpmB of Salmonella choleraesuis (strain SC-B67).